Reading from the N-terminus, the 197-residue chain is A-type ATP synthase subunit E (197 aa).

This sequence belongs to the V-ATPase E subunit family. Has multiple subunits with at least A(3), B(3), C, D, E, F, H, I and proteolipid K(x).

The protein localises to the cell membrane. In terms of biological role, component of the A-type ATP synthase that produces ATP from ADP in the presence of a proton gradient across the membrane. This chain is A-type ATP synthase subunit E, found in Thermococcus gammatolerans (strain DSM 15229 / JCM 11827 / EJ3).